The primary structure comprises 148 residues: Small ribosomal subunit protein eS6 (148 aa).

Belongs to the eukaryotic ribosomal protein eS6 family.

The polypeptide is Small ribosomal subunit protein eS6 (Pyrobaculum neutrophilum (strain DSM 2338 / JCM 9278 / NBRC 100436 / V24Sta) (Thermoproteus neutrophilus)).